The primary structure comprises 336 residues: DNA topoisomerase 1B (336 aa).

The Topo IB-type catalytic domain occupies 79–336 (EIHIQGAEKE…KSYRKDVLGE (258 aa)). The O-(3'-phospho-DNA)-tyrosine intermediate role is filled by Tyr294.

This sequence belongs to the type IB topoisomerase family. As to quaternary structure, monomer.

It localises to the virion. It catalyses the reaction ATP-independent breakage of single-stranded DNA, followed by passage and rejoining.. Functionally, releases the supercoiling and torsional tension of DNA introduced during the DNA replication and transcription by transiently cleaving and rejoining one strand of the DNA duplex. Introduces a single-strand break via transesterification at a target site in duplex DNA. The scissile phosphodiester is attacked by the catalytic tyrosine of the enzyme, resulting in the formation of a DNA-(3'-phosphotyrosyl)-enzyme intermediate and the expulsion of a 5'-OH DNA strand. The free DNA strand then undergoes passage around the unbroken strand thus removing DNA supercoils. Finally, in the religation step, the DNA 5'-OH attacks the covalent intermediate to expel the active-site tyrosine and restore the DNA phosphodiester backbone. Cleaves DNA after CCCTT sequence. This chain is DNA topoisomerase 1B (TOP1E), found in Acanthamoeba polyphaga mimivirus (APMV).